The primary structure comprises 566 residues: MDNSHDSDSVFLYHIPCDNCGSSDGNSLFSDGHTFCYVCEKWTAGNEDTKERASKRKPSGGKPMTYNVWNFGESNGRYSALTARGISKETCQKAGYWIAKVDGVMYQVADYRDQNGNIVSQKVRDKDKNFKTTGSHKSDALFGKHLWNGGKKIVVTEGEIDMLTVMELQDCKYPVVSLGHGASAAKKTCAANYEYFDQFEQIILMFDMDEAGRKAVEEAAQVLPAGKVRVAVLPCKDANECHLNGHDREIMEQVWNAGPWIPDGVVSALSLRERIREHLSSEESVGLLFSGCTGINDKTLGARGGEVIMVTSGSGMGKSTFVRQQALQWGTAMGKKVGLAMLEESVEETAEDLIGLHNRVRLRQSDSLKREIIENGKFDQWFDELFGNDTFHLYDSFAEAETDRLLAKLAYMRSGLGCDVIILDHISIVVSASGESDERKMIDNLMTKLKGFAKSTGVVLVVICHLKNPDKGKAHEEGRPVSITDLRGSGALRQLSDTIIALERNQQGDMPNLVLVRILKCRFTGDTGIAGYMEYNKETGWLEPSSYSGEEESHSESTDWSNDTDF.

Residues Cys17, Cys20, Cys36, and Cys39 each contribute to the Zn(2+) site. The C4-like; zinc ribbon fold zinc-finger motif lies at Cys17 to Cys39. The 88-residue stretch at Lys151–Ala238 folds into the Toprim domain. Glu157, Asp207, and Asp237 together coordinate Mg(2+). The SF4 helicase domain maps to Ser281–Ser548. An ATP-binding site is contributed by Ser312 to Ser319. The segment at Glu543 to Phe566 is disordered. The tract at residues Glu550 to Phe566 is binding to viral DNA polymerase.

This sequence belongs to the Teseptimavirus DNA helicase/primase family. In terms of assembly, homohexamer. Assembles as a hexamer onto linear or circular ssDNA in the presence of ATP or dTTP. Present in a mixture of heptamers and hexamers in the absence of DNA. Interacts (via C-terminus) with the viral DNA polymerase that is bound to DNA; this interaction is essential to initiate leading-strand DNA synthesis. The priming complex consists of 2 DNA polymerases and 1 helicase-primase hexamer that assemble on the DNA template. Interacts with the single-stranded DNA-binding protein. Part of the replicase complex that includes the DNA polymerase, thioredoxin, the primase/helicase and the single-stranded DNA binding protein. Requires Mg(2+) as cofactor.

It carries out the reaction ATP + H2O = ADP + phosphate + H(+). In terms of biological role, ATP-dependent DNA helicase and primase essential for viral DNA replication and recombination. The helicase moves 5' -&gt; 3' on the lagging strand template, unwinding the DNA duplex ahead of the leading strand polymerase at the replication fork and generating ssDNA for both leading and lagging strand synthesis. ATP or dTTP hydrolysis propels each helicase domain to translocate 2 nt per step sequentially along DNA. Mediates strand transfer when a joint molecule is available and participates in recombinational DNA repair through its role in strand exchange. Primase activity synthesizes short RNA primers at the sequence 5'-GTC-3' on the lagging strand that the polymerase elongates using dNTPs and providing the primase is still present. This Escherichia phage T7 (Bacteriophage T7) protein is DNA helicase/primase.